Here is a 186-residue protein sequence, read N- to C-terminus: tRNA (cytidine(56)-2'-O)-methyltransferase (186 aa).

S-adenosyl-L-methionine contacts are provided by residues Leu84 and 110–114 (GAEKV).

The protein belongs to the aTrm56 family. Homodimer.

It is found in the cytoplasm. The enzyme catalyses cytidine(56) in tRNA + S-adenosyl-L-methionine = 2'-O-methylcytidine(56) in tRNA + S-adenosyl-L-homocysteine + H(+). Its function is as follows. Specifically catalyzes the AdoMet-dependent 2'-O-ribose methylation of cytidine at position 56 in tRNAs. This chain is tRNA (cytidine(56)-2'-O)-methyltransferase, found in Staphylothermus marinus (strain ATCC 43588 / DSM 3639 / JCM 9404 / F1).